Reading from the N-terminus, the 122-residue chain is MARIAGVNIPTAKRVVIALTYIHGIGPKFAQEIMEKVGLSADRRVHQLTDAEVLAIRETIDRDYQVEGDLRRDTAMNIKRLMDLGCYRGLRHRRGLPVRGQRTHTNARTRKGPAKAIAGKKK.

Positions 99-122 (RGQRTHTNARTRKGPAKAIAGKKK) are disordered.

It belongs to the universal ribosomal protein uS13 family. As to quaternary structure, part of the 30S ribosomal subunit. Forms a loose heterodimer with protein S19. Forms two bridges to the 50S subunit in the 70S ribosome.

Functionally, located at the top of the head of the 30S subunit, it contacts several helices of the 16S rRNA. In the 70S ribosome it contacts the 23S rRNA (bridge B1a) and protein L5 of the 50S subunit (bridge B1b), connecting the 2 subunits; these bridges are implicated in subunit movement. Contacts the tRNAs in the A and P-sites. In Allorhizobium ampelinum (strain ATCC BAA-846 / DSM 112012 / S4) (Agrobacterium vitis (strain S4)), this protein is Small ribosomal subunit protein uS13.